A 213-amino-acid chain; its full sequence is Thymidylate kinase (213 aa).

11 to 18 (GPEGAGKT) provides a ligand contact to ATP.

Belongs to the thymidylate kinase family.

The enzyme catalyses dTMP + ATP = dTDP + ADP. Phosphorylation of dTMP to form dTDP in both de novo and salvage pathways of dTTP synthesis. The polypeptide is Thymidylate kinase (Leuconostoc mesenteroides subsp. mesenteroides (strain ATCC 8293 / DSM 20343 / BCRC 11652 / CCM 1803 / JCM 6124 / NCDO 523 / NBRC 100496 / NCIMB 8023 / NCTC 12954 / NRRL B-1118 / 37Y)).